A 386-amino-acid chain; its full sequence is Putative acid--amine ligase YgiC (386 aa).

100-102 contacts ATP; it reads RLD. Positions 102, 115, and 117 each coordinate Mg(2+). ATP contacts are provided by residues Lys267, Lys302, Gly309, Gln336, and 371-373; that span reads LIT.

It belongs to the glutathionylspermidine synthase preATP-grasp family.

In terms of biological role, may be a ligase forming an amide bond. Shows ATPase activity. The protein is Putative acid--amine ligase YgiC (ygiC) of Escherichia coli O157:H7.